Reading from the N-terminus, the 239-residue chain is Transmembrane emp24 domain-containing protein 6 (239 aa).

The signal sequence occupies residues 1 to 21 (MFPLLLVAELVVLSLVTSVKS). Topologically, residues 22-200 (QETDPLHGSK…FFLLQSNYTY (179 aa)) are lumenal. In terms of domain architecture, GOLD spans 53 to 138 (IECFWQFADQ…SIQVYLNFGV (86 aa)). N-linked (GlcNAc...) asparagine glycosylation is found at Asn156 and Asn197. The helical transmembrane segment at 201–223 (VNWWSTAQSLAIVLSGALQLYFL) threads the bilayer. Residues 224 to 239 (KRLFTASTTDTKKPRC) lie on the Cytoplasmic side of the membrane.

The protein belongs to the EMP24/GP25L family.

It is found in the endoplasmic reticulum membrane. This Mus musculus (Mouse) protein is Transmembrane emp24 domain-containing protein 6 (Tmed6).